A 629-amino-acid polypeptide reads, in one-letter code: Dolichyl-diphosphooligosaccharide--protein glycosyltransferase subunit 2 (629 aa).

A signal peptide spans 1–22 (MAPPGSRTVLLLALTIIARTQA). At 23–541 (LKPTHYLTKH…RDPEKRPPTV (519 aa)) the chain is on the lumenal side. Residue Asn106 is glycosylated (N-linked (GlcNAc...) asparagine). A Glycyl lysine isopeptide (Lys-Gly) (interchain with G-Cter in ubiquitin) cross-link involves residue Lys154. The helical transmembrane segment at 542-562 (VSNTFTGLILSPLLLLFALWI) threads the bilayer. Over 563–570 (RIGAKISN) the chain is Cytoplasmic. A helical membrane pass occupies residues 571–591 (FTFGLTIIFHLGHAMLAMYVY). Over 592 to 594 (WTQ) the chain is Lumenal. A helical membrane pass occupies residues 595–615 (LNMFQTLKYLAILGSVTFLAG). Topologically, residues 616–629 (NRMLAQQAIKRTAH) are cytoplasmic.

This sequence belongs to the SWP1 family. Component of the oligosaccharyltransferase (OST) complex. OST exists in two different complex forms which contain common core subunits RPN1, RPN2, OST48, OST4, DAD1 and TMEM258, either STT3A or STT3B as catalytic subunits, and form-specific accessory subunits. STT3A complex assembly occurs through the formation of 3 subcomplexes. Subcomplex 1 contains RPN1 and TMEM258, subcomplex 2 contains the STT3A-specific subunits STT3A, DC2/OSTC, and KCP2 as well as the core subunit OST4, and subcomplex 3 contains RPN2, DAD1, and OST48. The STT3A complex can form stable complexes with the Sec61 complex or with both the Sec61 and TRAP complexes. Interacts with DDI2. Interacts with TMEM35A/NACHO.

The protein localises to the endoplasmic reticulum. It is found in the endoplasmic reticulum membrane. It participates in protein modification; protein glycosylation. Subunit of the oligosaccharyl transferase (OST) complex that catalyzes the initial transfer of a defined glycan (Glc(3)Man(9)GlcNAc(2) in eukaryotes) from the lipid carrier dolichol-pyrophosphate to an asparagine residue within an Asn-X-Ser/Thr consensus motif in nascent polypeptide chains, the first step in protein N-glycosylation. N-glycosylation occurs cotranslationally and the complex associates with the Sec61 complex at the channel-forming translocon complex that mediates protein translocation across the endoplasmic reticulum (ER). All subunits are required for a maximal enzyme activity. The chain is Dolichyl-diphosphooligosaccharide--protein glycosyltransferase subunit 2 from Sus scrofa (Pig).